We begin with the raw amino-acid sequence, 82 residues long: Putative antitoxin RelB1 (82 aa).

Its function is as follows. Antitoxin component of a type II toxin-antitoxin (TA) system. Its cognate toxin is RelE1 (Potential). In Methanocaldococcus jannaschii (strain ATCC 43067 / DSM 2661 / JAL-1 / JCM 10045 / NBRC 100440) (Methanococcus jannaschii), this protein is Putative antitoxin RelB1 (relB1).